The primary structure comprises 195 residues: Ribonuclease HII (195 aa).

In terms of domain architecture, RNase H type-2 spans S6–N195. Residues D12, E13, and D108 each contribute to the a divalent metal cation site.

This sequence belongs to the RNase HII family. Mn(2+) is required as a cofactor. The cofactor is Mg(2+).

It is found in the cytoplasm. It carries out the reaction Endonucleolytic cleavage to 5'-phosphomonoester.. Endonuclease that specifically degrades the RNA of RNA-DNA hybrids. This Prochlorococcus marinus (strain NATL1A) protein is Ribonuclease HII.